A 456-amino-acid polypeptide reads, in one-letter code: Mitochondrial import inner membrane translocase subunit TIM50 (456 aa).

A mitochondrion-targeting transit peptide spans 1–22; that stretch reads MSLSKLSQKCFSRHHARTFIRF. Residues 23 to 171 lie on the Mitochondrial matrix side of the membrane; that stretch reads SSSDFQSLLG…RRKRMERNTR (149 aa). Disordered regions lie at residues 101 to 120 and 132 to 165; these read ETEK…AIDE and EEAA…RRKR. Over residues 137–153 the composition is skewed to polar residues; the sequence is SKTSAPSGSSGDNNDQP. The helical transmembrane segment at 172–192 threads the bilayer; that stretch reads IGGYVLLGGSVIGFISFCFYY. Residues 193–456 are Mitochondrial intermembrane-facing; the sequence is GRAQRDEAGN…LFGFRRHASA (264 aa). An FCP1 homology domain is found at 247–391; it reads YLQPKYTIVI…VDLAELLKTI (145 aa).

This sequence belongs to the TIM50 family. As to quaternary structure, component of the TIM23 complex at least composed of tim-23, tim-17 and tim-50.

Its subcellular location is the mitochondrion inner membrane. Essential component of the TIM23 complex, a complex that mediates the translocation of transit peptide-containing proteins across the mitochondrial inner membrane. The sequence is that of Mitochondrial import inner membrane translocase subunit TIM50 (scpl-4) from Caenorhabditis briggsae.